Reading from the N-terminus, the 116-residue chain is uncharacterized protein (116 aa).

Topologically, residues 1-46 (MGDNTTVAPGTNQTLVEEDLGAQITHTLMVQIMSKLNEMLTEYQPQ) are extracellular. N-linked (GlcNAc...) asparagine; by host glycosylation is found at asparagine 4 and asparagine 12. Residues 47 to 67 (IIGIGATVLAIFVIMFISLLI) form a helical membrane-spanning segment. The Cytoplasmic segment spans residues 68-116 (ILGCNCIRPYNFKNLKRYITGKASKSVEYQPLKMSAVNMGMDEDDEFLA).

The protein localises to the host membrane. This is an uncharacterized protein from Magallana gigas (Pacific oyster).